Consider the following 450-residue polypeptide: Protein indeterminate-domain 13 (450 aa).

A Phosphoserine modification is found at S54. C2H2-type zinc fingers lie at residues 64 to 86 (FFCE…KRGH) and 106 to 136 (YICP…SRKH). The Nuclear localization signal signature appears at 128–135 (IKKHFSRK). The C2H2-type 2; degenerate zinc-finger motif lies at 141–165 (WKCDKCSKKYAVISDWKAHNKICGS). Zn(2+) is bound by residues C143, C146, H159, C163, C170, C172, H185, and C189. Residues 168-191 (FRCDCGTLFSRKDSFISHRSFCDV) form a CCHC-type 2; atypical zinc finger. The tract at residues 178–190 (RKDSFISHRSFCD) is SHR-binding. Residues 248-263 (FGQKFTNSNPTQQQPN) show a composition bias toward polar residues. The interval 248-280 (FGQKFTNSNPTQQQPNALALSSPPSPRSTSDSV) is disordered.

It is found in the nucleus. In terms of biological role, probable transcription factor. In Arabidopsis thaliana (Mouse-ear cress), this protein is Protein indeterminate-domain 13.